Reading from the N-terminus, the 514-residue chain is Glutamyl-tRNA(Gln) amidotransferase subunit A (514 aa).

Active-site charge relay system residues include lysine 76 and serine 151. Serine 175 functions as the Acyl-ester intermediate in the catalytic mechanism.

Belongs to the amidase family. GatA subfamily. Heterotrimer of A, B and C subunits.

It carries out the reaction L-glutamyl-tRNA(Gln) + L-glutamine + ATP + H2O = L-glutaminyl-tRNA(Gln) + L-glutamate + ADP + phosphate + H(+). Its function is as follows. Allows the formation of correctly charged Gln-tRNA(Gln) through the transamidation of misacylated Glu-tRNA(Gln) in organisms which lack glutaminyl-tRNA synthetase. The reaction takes place in the presence of glutamine and ATP through an activated gamma-phospho-Glu-tRNA(Gln). This is Glutamyl-tRNA(Gln) amidotransferase subunit A from Salinibacter ruber (strain DSM 13855 / M31).